The following is a 182-amino-acid chain: Vacuolar protein sorting-associated protein 29 (182 aa).

Lys50 bears the N6-acetyllysine mark.

The protein belongs to the VPS29 family. Component of the commander complex consisting of the CCC subcomplex and the retriever subcomplex. Component of the heterotrimeric retriever complex formed by VPS26C, VPS29 and VPS35L; within the complex interacts with VPS35L. Component of the heterotrimeric retromer cargo-selective complex (CSC), also described as vacuolar protein sorting subcomplex (VPS) formed by VPS26 (VPS26A or VPS26B), VPS29 and VPS35. The CSC has a highly elongated structure with VPS26 and VPS29 binding independently at opposite distal ends of VPS35 as central platform. The CSC is believed to associate with variable sorting nexins to form functionally distinct retromer complex variants. The originally described retromer complex (also called SNX-BAR retromer) is a pentamer containing the CSC and a heterodimeric membrane-deforming subcomplex formed between SNX1 or SNX2 and SNX5 or SNX6 (also called SNX-BAR subcomplex); the respective CSC and SNX-BAR subcomplexes associate with low affinity. The CSC associates with SNX3 to form a SNX3-retromer complex. The CSC associates with SNX27, the WASH complex and the SNX-BAR subcomplex to form the SNX27-retromer complex. Interacts with VPS26A, VPS35, SNX1, SNX2, SNX3, SNX27, WASHC5. Interacts with TBC1D5; this interaction is blocked by VPS35L in the retriever complex. Interacts with SNX17; the interaction is indirect; SNX17 (via its C-terminus) interacts with the retriever complex (via VPS26C and VPS35L). Interacts with VPS26B and ANKRD27.

The protein resides in the cytoplasm. It localises to the membrane. The protein localises to the endosome membrane. Functionally, component of the commander complex that is essential for endosomal recycling of transmembrane cargos; the commander complex is composed of the CCC subcomplex and the retriever subcomplex. Component of the retriever complex, which is a heterotrimeric complex related to retromer cargo-selective complex (CSC) and essential for retromer-independent retrieval and recycling of numerous cargos such as integrin alpha-5/beta-1 (ITGA5:ITGB1). Component of the retromer cargo-selective complex (CSC). The CSC is believed to be the core functional component of retromer or respective retromer complex variants acting to prevent missorting of selected transmembrane cargo proteins into the lysosomal degradation pathway. The recruitment of the CSC to the endosomal membrane involves RAB7A and SNX3. The SNX-BAR retromer mediates retrograde transport of cargo proteins from endosomes to the trans-Golgi network (TGN) and is involved in endosome-to-plasma membrane transport for cargo protein recycling. The SNX3-retromer mediates the retrograde endosome-to-TGN transport of WLS distinct from the SNX-BAR retromer pathway. The SNX27-retromer is believed to be involved in endosome-to-plasma membrane trafficking and recycling of a broad spectrum of cargo proteins. The CSC seems to act as recruitment hub for other proteins, such as the WASH complex and TBC1D5. Required to regulate transcytosis of the polymeric immunoglobulin receptor (pIgR-pIgA). In the endosomes, retriever complex drives the retrieval and recycling of NxxY-motif-containing cargo proteins by coupling to SNX17, a cargo essential for the homeostatic maintenance of numerous cell surface proteins associated with processes that include cell migration, cell adhesion, nutrient supply and cell signaling. The recruitment of the retriever complex to the endosomal membrane involves CCC and WASH complexes. Involved in GLUT1 endosome-to-plasma membrane trafficking; the function is dependent of association with ANKRD27. The polypeptide is Vacuolar protein sorting-associated protein 29 (Vps29) (Mus musculus (Mouse)).